A 257-amino-acid chain; its full sequence is S-methyl-5'-thioadenosine phosphorylase (257 aa).

Phosphate is bound by residues Ser-10 and 50–51; that span reads RH. A disulfide bond links Cys-130 and Cys-195. Met-180 is a substrate binding site. Thr-181 lines the phosphate pocket. 204–206 is a substrate binding site; it reads DYD. An intrachain disulfide couples Cys-246 to Cys-248.

Belongs to the PNP/MTAP phosphorylase family. MTAP subfamily. As to quaternary structure, homohexamer. Dimer of a homotrimer.

The enzyme catalyses S-methyl-5'-thioadenosine + phosphate = 5-(methylsulfanyl)-alpha-D-ribose 1-phosphate + adenine. It participates in amino-acid biosynthesis; L-methionine biosynthesis via salvage pathway; S-methyl-5-thio-alpha-D-ribose 1-phosphate from S-methyl-5'-thioadenosine (phosphorylase route): step 1/1. Its function is as follows. Catalyzes the reversible phosphorylation of S-methyl-5'-thioadenosine (MTA) to adenine and 5-methylthioribose-1-phosphate. Involved in the breakdown of MTA, a major by-product of polyamine biosynthesis. Responsible for the first step in the methionine salvage pathway after MTA has been generated from S-adenosylmethionine. Has broad substrate specificity with 6-aminopurine nucleosides as preferred substrates. The polypeptide is S-methyl-5'-thioadenosine phosphorylase (Pyrococcus furiosus (strain ATCC 43587 / DSM 3638 / JCM 8422 / Vc1)).